The chain runs to 306 residues: D-alanine--D-alanine ligase (306 aa).

An ATP-grasp domain is found at 104-303 (KMLWKAFGLP…FEQLVVKILE (200 aa)). Position 134-189 (134-189 (VAKLGLPLMVKPSLEGSSVGLTKVKAVEELKSAVEYALKFDNTILIEEWLAGDELT)) interacts with ATP. Mg(2+) is bound by residues aspartate 257, glutamate 270, and asparagine 272.

This sequence belongs to the D-alanine--D-alanine ligase family. Mg(2+) is required as a cofactor. It depends on Mn(2+) as a cofactor.

It is found in the cytoplasm. The enzyme catalyses 2 D-alanine + ATP = D-alanyl-D-alanine + ADP + phosphate + H(+). It functions in the pathway cell wall biogenesis; peptidoglycan biosynthesis. In terms of biological role, cell wall formation. The protein is D-alanine--D-alanine ligase of Haemophilus influenzae (strain 86-028NP).